Reading from the N-terminus, the 265-residue chain is NAD kinase (265 aa).

Asp45 serves as the catalytic Proton acceptor. Residues 45–46 (DG), 121–122 (NE), Arg147, Asp149, 160–165 (TAYSKS), Ala184, and Gln222 contribute to the NAD(+) site.

The protein belongs to the NAD kinase family. A divalent metal cation is required as a cofactor.

The protein resides in the cytoplasm. The catalysed reaction is NAD(+) + ATP = ADP + NADP(+) + H(+). Its function is as follows. Involved in the regulation of the intracellular balance of NAD and NADP, and is a key enzyme in the biosynthesis of NADP. Catalyzes specifically the phosphorylation on 2'-hydroxyl of the adenosine moiety of NAD to yield NADP. The chain is NAD kinase from Lacticaseibacillus paracasei (strain ATCC 334 / BCRC 17002 / CCUG 31169 / CIP 107868 / KCTC 3260 / NRRL B-441) (Lactobacillus paracasei).